The chain runs to 34 residues: Phalloidin proprotein (34 aa).

The propeptide occupies 1–10; that stretch reads MSDINTTCLP. Residues 11–17 constitute a cross-link (cyclopeptide (Ala-Pro)); the sequence is AWLATCP. The segment at residues 12–16 is a cross-link (2'-cysteinyl-6'-hydroxytryptophan sulfoxide (Trp-Cys)); the sequence is WLATC. The propeptide occupies 18 to 34; it reads CTGDDVNPTLTCGESLC.

The protein belongs to the MSDIN fungal toxin family. Processed by the macrocyclase-peptidase enzyme POPB to yield a toxic cyclic heptapeptide. POPB first removes 10 residues from the N-terminus. Conformational trapping of the remaining peptide forces the enzyme to release this intermediate rather than proceed to macrocyclization. The enzyme rebinds the remaining peptide in a different conformation and catalyzes macrocyclization of the N-terminal 7 residues.

Toxin that belongs to the bicyclic heptapeptides called phallotoxins. Although structurally related to amatoxins, phallotoxins have a different mode of action, which is the stabilization of F-actin. Phallotoxins are poisonous when administered parenterally, but not orally because of poor absorption. This chain is Phalloidin proprotein, found in Amanita phalloides (Death cap).